Reading from the N-terminus, the 795-residue chain is TBC1 domain family member 5 (795 aa).

Positions 1–13 (MYHSLSETRHPLQ) are enriched in basic and acidic residues. The segment at 1–49 (MYHSLSETRHPLQPEEQEVGIDPLSSYSNKSGGDSNKNGRRTSSTLDSE) is disordered. A compositionally biased stretch (polar residues) spans 25–49 (SSYSNKSGGDSNKNGRRTSSTLDSE). T42 carries the post-translational modification Phosphothreonine. 2 positions are modified to phosphoserine: S43 and S44. The required for interaction with retromer; involved in interaction with ATG8 family proteins stretch occupies residues 56–64 (RKEWEELFV). Residues 57-62 (KEWEEL) carry the LIR 1 motif. A Rab-GAP TBC domain is found at 81 to 359 (LRSSRFRSIC…VVWDALFADG (279 aa)). S460 bears the Phosphoserine mark. Residues 475–564 (PGSAGGPVPG…PPSSATKKDS (90 aa)) are disordered. The span at 484–496 (GGNSSSSSSVVIP) shows a compositional bias: low complexity. S522, S539, S541, S544, S554, S570, S584, and S730 each carry phosphoserine. Positions 523–542 (MPVQLNKGLSSKNISSSPSV) are enriched in polar residues. Positions 554 to 564 (SPPSSATKKDS) are enriched in polar residues. The tract at residues 674–795 (HYCSSGQGQG…GFTIVSPLDI (122 aa)) is disordered. A compositionally biased stretch (polar residues) spans 727-748 (ARGSFSGQAQPLRTLRSTSGKS). Residues 765–776 (PASASSSNPSSS) show a composition bias toward low complexity. Positions 785–789 (SGFTI) match the LIR 2 motif. Residues 786–791 (GFTIVS) are required for interaction with ATG8 family proteins. Residue S791 is modified to Phosphoserine.

As to quaternary structure, interacts with MAP1LC3A, MAP1LC3B, MAP1LC3C, GABARAP, GABARAPL1, GABARAPL2. Interacts with VPS29 and VPS35; indicative for an association with retromer CSC subcomplex. MAP1LC3A and VPS29 compete for binding to TBC1D5. Interacts with AP2M1; indicative for an association with the AP2 complex. Interacts with ULK1 and ATG13 (phosphorylated); indicative for an association with the activated ULK1-ATG13-FIP200 complex. Interacts with ATG9A; the interactions seems to be restricted to the AP2-clathrin-associated fraction of ATG9A.

The protein resides in the endosome membrane. Its subcellular location is the cytoplasmic vesicle. It localises to the autophagosome. In terms of biological role, may act as a GTPase-activating protein (GAP) for Rab family protein(s). May act as a GAP for RAB7A. Can displace RAB7A and retromer CSC subcomplex from the endosomal membrane to the cytosol; at least retromer displacement seems to require its catalytic activity. Required for retrograde transport of cargo proteins from endosomes to the trans-Golgi network (TGN); the function seems to require its catalytic activity. Involved in regulation of autophagy. May act as a molecular switch between endosomal and autophagosomal transport and is involved in reprogramming vesicle trafficking upon autophagy induction. Involved in the trafficking of ATG9A upon activation of autophagy. May regulate the recruitment of ATG9A-AP2-containing vesicles to autophagic membranes. The protein is TBC1 domain family member 5 (TBC1D5) of Homo sapiens (Human).